The chain runs to 140 residues: Large ribosomal subunit protein uL16c (140 aa).

The protein belongs to the universal ribosomal protein uL16 family. In terms of assembly, part of the 50S ribosomal subunit.

It localises to the plastid. Its subcellular location is the chloroplast. The polypeptide is Large ribosomal subunit protein uL16c (Psilotum nudum (Whisk fern)).